The primary structure comprises 387 residues: Early growth response protein 3 (387 aa).

The disordered stretch occupies residues 241–283; that stretch reads PGFGSLPQPPLTLKPIRPRKYPNRPSKTPLHERPHACPAEGCD. Residues 269–283 show a composition bias toward basic and acidic residues; sequence PLHERPHACPAEGCD. 3 C2H2-type zinc fingers span residues 275–299, 305–327, and 333–355; these read HACP…LRIH, FQCR…IRTH, and FACE…AKIH. Residues 348 to 387 are disordered; the sequence is RKRHAKIHLKQKEKKSEKGGAPSASSAPTVSLAPVVTTCA. Residues 350-360 are compositionally biased toward basic residues; that stretch reads RHAKIHLKQKE.

This sequence belongs to the EGR C2H2-type zinc-finger protein family.

Its subcellular location is the nucleus. In terms of biological role, probable transcription factor involved in muscle spindle development. This chain is Early growth response protein 3 (Egr3), found in Mus musculus (Mouse).